A 607-amino-acid chain; its full sequence is Elongation factor 4 (607 aa).

The tr-type G domain maps to 11 to 193 (KKIRNFSIIA…QIVELVPPPT (183 aa)). GTP-binding positions include 23 to 28 (DHGKST) and 140 to 143 (NKID).

It belongs to the TRAFAC class translation factor GTPase superfamily. Classic translation factor GTPase family. LepA subfamily.

The protein resides in the cell membrane. The enzyme catalyses GTP + H2O = GDP + phosphate + H(+). Its function is as follows. Required for accurate and efficient protein synthesis under certain stress conditions. May act as a fidelity factor of the translation reaction, by catalyzing a one-codon backward translocation of tRNAs on improperly translocated ribosomes. Back-translocation proceeds from a post-translocation (POST) complex to a pre-translocation (PRE) complex, thus giving elongation factor G a second chance to translocate the tRNAs correctly. Binds to ribosomes in a GTP-dependent manner. This Exiguobacterium sp. (strain ATCC BAA-1283 / AT1b) protein is Elongation factor 4.